The following is a 312-amino-acid chain: Olfactory receptor 8G50 (312 aa).

Residues 1–28 (MAYSNQSRVTEFIISGLTNKPELQLPLF) lie on the Extracellular side of the membrane. N5 is a glycosylation site (N-linked (GlcNAc...) asparagine). Residues 29 to 49 (LLFLGIYLFTVLGNLGMIILI) form a helical membrane-spanning segment. At 50–56 (LLSSHLH) the chain is on the cytoplasmic side. A helical membrane pass occupies residues 57-77 (TPMYFFLSSLSFIDLCYSTII). At 78–99 (TPKMLVNFVTTKNVISYQECMT) the chain is on the extracellular side. Residues C97 and C189 are joined by a disulfide bond. The chain crosses the membrane as a helical span at residues 100 to 120 (QLYFFIAFVISECHMLAAMAY). Topologically, residues 121-143 (DRYVAICNPLLYNVTMSYQVCSW) are cytoplasmic. Residues 144–164 (MVGGVYGMGFIGAAIHTFCML) form a helical membrane-spanning segment. Topologically, residues 165-204 (RVVFCKDNIINHYFCDLFPLMELACSSTYVNEVVLLSLSA) are extracellular. A helical transmembrane segment spans residues 205-225 (FNIFIPTLTILGSYIFIIISI). Topologically, residues 226–244 (LRIKSTEGRFKAFSTCSSH) are cytoplasmic. The chain crosses the membrane as a helical span at residues 245-265 (FSAVSVFFGSLAFMYLQPFSV). Residues 266 to 274 (SSKDKGKVS) lie on the Extracellular side of the membrane. Residues 275 to 292 (SVFYTTIVPMLNPMIYSL) traverse the membrane as a helical segment. The Cytoplasmic portion of the chain corresponds to 293–312 (RNRDVKLALNKLFQKKKFHV).

This sequence belongs to the G-protein coupled receptor 1 family.

Its subcellular location is the cell membrane. Functionally, odorant receptor. The protein is Olfactory receptor 8G50 of Mus musculus (Mouse).